Consider the following 430-residue polypeptide: BSD domain-containing protein 1 (430 aa).

2 positions are modified to phosphoserine: Ser-92 and Ser-166. One can recognise a BSD domain in the interval 146-198; sequence WLSQFCLEEKKGEISELLVGSPSIRALYTKMVPAAVSHSEFWHRYFYKVHQLE. 2 disordered regions span residues 247–298 and 319–398; these read STFP…APEA and LAVD…WEKD. Polar residues predominate over residues 276-291; that stretch reads PSESSESISLVTQIAN. Residues 350-367 show a composition bias toward basic and acidic residues; sequence PPARVETLREEAPTDLRV. At Thr-356 the chain carries Phosphothreonine. The segment covering 371–390 has biased composition (polar residues); the sequence is NSDSGKSTPSNNGKKGSSTD. Ser-387, Ser-388, and Ser-418 each carry phosphoserine.

This is BSD domain-containing protein 1 (BSDC1) from Homo sapiens (Human).